We begin with the raw amino-acid sequence, 1198 residues long: Tetratricopeptide repeat protein 17 (1198 aa).

A TPR 1 repeat occupies 295 to 328; that stretch reads FTSYYTLGNIYAMLGEYNHSVLCYDHALQAKPGF. A coiled-coil region spans residues 340–382; it reads CQQKLEQKLEAQHRSLQRTLNELKEYQKQHDHYLRQQEILEKH. TPR repeat units follow at residues 619-652 and 689-722; these read WLIL…APVQ and PLTF…STKC. Disordered regions lie at residues 774–793 and 902–954; these read LDAA…PVLS and VKKP…YQSL. Residues 902–914 show a composition bias toward basic residues; it reads VKKPKGDHKKPPG. 3 TPR repeats span residues 1071-1105, 1108-1141, and 1142-1175; these read SWVL…APHQ, DVPL…APHF, and AVNH…QPEF.

The protein belongs to the TTC17 family. Interacts with CATIP.

Its subcellular location is the cytoplasm. It localises to the cell membrane. The protein resides in the cytoskeleton. Its function is as follows. Plays a role in primary ciliogenesis by modulating actin polymerization. The sequence is that of Tetratricopeptide repeat protein 17 (Ttc17) from Mus musculus (Mouse).